Here is a 116-residue protein sequence, read N- to C-terminus: UPF0127 protein PF1050 (116 aa).

This sequence belongs to the UPF0127 family.

This Pyrococcus furiosus (strain ATCC 43587 / DSM 3638 / JCM 8422 / Vc1) protein is UPF0127 protein PF1050.